A 79-amino-acid polypeptide reads, in one-letter code: Conotoxin ArMSGL-0124 (79 aa).

An N-terminal signal peptide occupies residues methionine 1 to serine 20. Positions histidine 21–threonine 44 are excised as a propeptide. 3 disulfides stabilise this stretch: cysteine 52–cysteine 64, cysteine 56–cysteine 73, and cysteine 63–cysteine 77. Residue leucine 78 is modified to Leucine amide.

The protein belongs to the conotoxin O3 superfamily. In terms of tissue distribution, expressed by the venom duct.

It is found in the secreted. In Conus arenatus (Sand-dusted cone), this protein is Conotoxin ArMSGL-0124.